Consider the following 431-residue polypeptide: Transmembrane protease serine 11C (431 aa).

At 1–33 (MARGQPRRSEEQWTALQNRTECKTKIKLTRCGK) the chain is on the cytoplasmic side. Residues 34-54 (ITLGILTAVLAAVLIGLIAYF) form a helical; Signal-anchor for type II membrane protein membrane-spanning segment. At 55-431 (AACGKDSFYY…RDWITSKTGL (377 aa)) the chain is on the extracellular side. The SEA domain occupies 60 to 177 (DSFYYHVSFK…SSFKFSDIAM (118 aa)). Residue Asn99 is glycosylated (N-linked (GlcNAc...) asparagine). Positions 200-430 (VAGGQDAEEG…YRDWITSKTG (231 aa)) constitute a Peptidase S1 domain. The cysteines at positions 225 and 241 are disulfide-linked. The active-site Charge relay system is His240. A glycan (N-linked (GlcNAc...) asparagine) is linked at Asn276. Asp285 serves as the catalytic Charge relay system. Asn347 is a glycosylation site (N-linked (GlcNAc...) asparagine). Disulfide bonds link Cys350–Cys366 and Cys377–Cys406. The active-site Charge relay system is Ser381.

It belongs to the peptidase S1 family. In terms of processing, proteolytically cleaved via an autocatalytic mechanism. Expressed specifically in Purkinje neurons of the cerebellum (at protein level). Also detected in spinal cord.

It is found in the cell membrane. Its subcellular location is the cell projection. The protein resides in the dendrite. The protein localises to the perikaryon. In terms of biological role, serine protease which has a preference for Arg or Lys in position P1 and uncharged residues in positions P2 and P3. Shows specificity towards FGF2 in vitro. This is Transmembrane protease serine 11C from Mus musculus (Mouse).